The sequence spans 940 residues: MLSKLLRLGEGRMLKRLKRVADYVNTLSDEVEKLTDAELRAKTDEFKKRHADGESLDDLLPEAFAVAREAAWRVLDQRPFDVQVMGAAALHFGNVAEMKTGEGKTLTSVLPAYLNGIGGKGVHVVTVNDYLAKRDSEWMGRVHRFLGLDVGVILAQMTPDERRVAYNADITYGTNNEFGFDYLRDNMAHSLDDLVQRGHNFAIVDEVDSILIDEARTPLIISGPADGASNWYLEFARLAPLMEKDVHYEVDLRKRTVGVHELGVEFVEDQLGIDNLYEAANSPLVSYLNNALKAKELFHRDKDYIVRDGEVLIVDEFTGRVLYGRRYNEGMHQAIEAKEHVEIKAENQTLATITLQNYFRLYDKLSGMTGTAQTEAAELHEIYKLGVVPIPTNKPMIRTDQSDLIYKTEEAKYIAVVDDVVERYQKGQPVLIGTTSVERSEYLSRQFQKRRIPHNVLNAKYHEQEAGIVAVAGRRGGVTVATHMAGRGTDIVLGGNVDFLTDQRLRERGLDPVETPDEYEAAWHEELPKVKAEAAAEAKEVIEAGGLYVLGTERHESRRIDNQLRGRSGRQGDPGESRFYLSLGDELMRRFNGAALEAMLNRLNLPDDVPIEAKMVTRAIKSAQTQVEQQNFEVRKNVLKYDEVMNQQRKVIYAERRRILEGENLKEQALEMVRDVVTAYVNGATAEGYAEDWDLDALWTALKTLYPVGIDYATLTRRDADGGFDDLTREELLEALLKDAERAYATREAELEEIAGEGAMRQLERNVLLNVIDRKWREHLYEMDYLKEGIGLRAMAQRDPLVEYQREGYDMFMAMLDGMKEESVGFLFNVTVEAVPAPQVAPVQTPEGLAELGAPAEQGGTATAARDEAPTQLRAKGIDNEAPAMTYSGPSEDGSAQVQRNGGDAKTPAGVPAGASRRERRAAARQQGRGAKPPKSVKRR.

Residues Q83, 101 to 105 (GEGKT), and D490 each bind ATP. The interval 856 to 940 (AEQGGTATAA…AKPPKSVKRR (85 aa)) is disordered.

This sequence belongs to the SecA family. Monomer and homodimer. Part of the essential Sec protein translocation apparatus which comprises SecA, SecYEG and auxiliary proteins SecDF. Other proteins may also be involved.

It localises to the cell membrane. The protein localises to the cytoplasm. It catalyses the reaction ATP + H2O + cellular proteinSide 1 = ADP + phosphate + cellular proteinSide 2.. Its function is as follows. Part of the Sec protein translocase complex. Interacts with the SecYEG preprotein conducting channel. Has a central role in coupling the hydrolysis of ATP to the transfer of proteins into and across the cell membrane, serving as an ATP-driven molecular motor driving the stepwise translocation of polypeptide chains across the membrane. In Mycolicibacterium paratuberculosis (strain ATCC BAA-968 / K-10) (Mycobacterium paratuberculosis), this protein is Protein translocase subunit SecA 1.